A 154-amino-acid chain; its full sequence is Ribonuclease H (154 aa).

Residues 1 to 142 (MKQVDIFTDG…CDTIARGHAS (142 aa)) enclose the RNase H type-1 domain. Mg(2+)-binding residues include Asp-9, Glu-47, Asp-69, and Asp-134.

It belongs to the RNase H family. As to quaternary structure, monomer. The cofactor is Mg(2+).

Its subcellular location is the cytoplasm. It carries out the reaction Endonucleolytic cleavage to 5'-phosphomonoester.. In terms of biological role, endonuclease that specifically degrades the RNA of RNA-DNA hybrids. The sequence is that of Ribonuclease H from Oleidesulfovibrio alaskensis (strain ATCC BAA-1058 / DSM 17464 / G20) (Desulfovibrio alaskensis).